We begin with the raw amino-acid sequence, 62 residues long: Alkaline proteinase (62 aa).

A Peptidase S8 domain is found at 1-62 (GSTSYIYDTS…FAPGTSVLSS (62 aa)). The active-site Charge relay system is Asp-21.

Its subcellular location is the secreted. Inhibited by phenylmethanesulfonyl fluoride (PMSF) and chymostatin (CST), but not by Bowman-Birk type trypsin-chymotrypsin inhibitor (BBI). In terms of biological role, serine protease. May be involved in the invasion of grains and hydrolysis of grain proteins. This chain is Alkaline proteinase, found in Fusarium culmorum.